We begin with the raw amino-acid sequence, 346 residues long: UPF0425 pyridoxal phosphate-dependent protein MK0620 (346 aa).

At K206 the chain carries N6-(pyridoxal phosphate)lysine.

The cofactor is pyridoxal 5'-phosphate.

The sequence is that of UPF0425 pyridoxal phosphate-dependent protein MK0620 from Methanopyrus kandleri (strain AV19 / DSM 6324 / JCM 9639 / NBRC 100938).